The chain runs to 425 residues: Tyrosine--tRNA ligase (425 aa).

Tyr-37 contacts L-tyrosine. The 'HIGH' region signature appears at 42 to 51 (PTADSLHLGH). Residues Tyr-175 and Gln-179 each coordinate L-tyrosine. The 'KMSKS' region motif lies at 235 to 239 (KFGKT). ATP is bound at residue Lys-238. The S4 RNA-binding domain maps to 357-415 (QDLQQALVNAELAPSRGQARKLIEAKSVSINGSLQTDAEYTFGEDDRLFGQYTLLRRGK).

The protein belongs to the class-I aminoacyl-tRNA synthetase family. TyrS type 1 subfamily. Homodimer.

It is found in the cytoplasm. It catalyses the reaction tRNA(Tyr) + L-tyrosine + ATP = L-tyrosyl-tRNA(Tyr) + AMP + diphosphate + H(+). Functionally, catalyzes the attachment of tyrosine to tRNA(Tyr) in a two-step reaction: tyrosine is first activated by ATP to form Tyr-AMP and then transferred to the acceptor end of tRNA(Tyr). The chain is Tyrosine--tRNA ligase from Erwinia tasmaniensis (strain DSM 17950 / CFBP 7177 / CIP 109463 / NCPPB 4357 / Et1/99).